The following is a 469-amino-acid chain: E3 ubiquitin-protein ligase TRIM21 (469 aa).

The RING-type zinc-finger motif lies at 16–55; it reads CSICLDPMVEPMSIECGHSFCQECISEVGKEGGSVCPVCR. The segment at 87–128 adopts a B box-type zinc-finger fold; it reads PHGELCVVHREKIHLFCEEDGKALCWVCSQSQKHRDHPMVPI. Zn(2+) contacts are provided by Cys92, His95, Cys114, and His120. The stretch at 128–245 forms a coiled coil; the sequence is IEEAAQEYQE…RRGSALELLQ (118 aa). Ser266 carries the post-translational modification Phosphoserine. The B30.2/SPRY domain occupies 268 to 467; that stretch reads DLRNVFYVPG…APLILCPLKT (200 aa).

This sequence belongs to the TRIM/RBCC family. Homotrimer. Interacts (via C-terminus) with IRF8 (via C-terminus). Component of a SCF(SKP2)-like complex containing CUL1, SKP1, TRIM21 and SKP2. Interacts with CALR, CUL1, FBXW11, HSPA5, IKBKB, IRF3, SKP1 and VCP. Interacts with SKP2; the interaction with SKP2 does not depend on an intact F-box domain. Interacts (via N-terminus and C-terminus) with DCP2 (via N-terminus and C-terminus). Interacts with ULK1, BECN1 and with ATG8 family members, including GABARAP, GABARAPL1, GABARAPL2 and MAP1LC3C/LC3C. Interacts with TRIM21 and SQSTM1/sequestosome 1. Interacts with IRF3. Interacts (via the SPRY domain) with NMI (via coiled-coil domain); the interaction promotes 'Lys-63'-linked ubiquitination of NMI. Interacts with IFI35 and NMI; the interaction facilitates NMI-IFI35 complex formation. In terms of processing, autoubiquitinated; does not lead to its proteasomal degradation. Deubiquitinated by USP4; leading to its stabilization.

It is found in the cytoplasm. It localises to the cytoplasmic vesicle. Its subcellular location is the autophagosome. The protein resides in the nucleus. The protein localises to the P-body. It is found in the stress granule. The catalysed reaction is S-ubiquitinyl-[E2 ubiquitin-conjugating enzyme]-L-cysteine + [acceptor protein]-L-lysine = [E2 ubiquitin-conjugating enzyme]-L-cysteine + N(6)-ubiquitinyl-[acceptor protein]-L-lysine.. It participates in protein modification; protein ubiquitination. In terms of biological role, E3 ubiquitin-protein ligase whose activity is dependent on E2 enzymes, UBE2D1, UBE2D2, UBE2E1 and UBE2E2. Forms a ubiquitin ligase complex in cooperation with the E2 UBE2D2 that is used not only for the ubiquitination of USP4 and IKBKB but also for its self-ubiquitination. Component of cullin-RING-based SCF (SKP1-CUL1-F-box protein) E3 ubiquitin-protein ligase complexes such as SCF(SKP2)-like complexes. A TRIM21-containing SCF(SKP2)-like complex is shown to mediate ubiquitination of CDKN1B ('Thr-187' phosphorylated-form), thereby promoting its degradation by the proteasome. Monoubiquitinates IKBKB that will negatively regulates Tax-induced NF-kappa-B signaling. Negatively regulates IFN-beta production post-pathogen recognition by catalyzing polyubiquitin-mediated degradation of IRF3. Mediates the ubiquitin-mediated proteasomal degradation of IgG1 heavy chain, which is linked to the VCP-mediated ER-associated degradation (ERAD) pathway. Promotes IRF8 ubiquitination, which enhanced the ability of IRF8 to stimulate cytokine genes transcription in macrophages. Plays a role in the regulation of the cell cycle progression. Enhances the decapping activity of DCP2. Exists as a ribonucleoprotein particle present in all mammalian cells studied and composed of a single polypeptide and one of four small RNA molecules. At least two isoforms are present in nucleated and red blood cells, and tissue specific differences in RO/SSA proteins have been identified. The common feature of these proteins is their ability to bind HY RNAs.2. Involved in the regulation of innate immunity and the inflammatory response in response to IFNG/IFN-gamma. Organizes autophagic machinery by serving as a platform for the assembly of ULK1, Beclin 1/BECN1 and ATG8 family members and recognizes specific autophagy targets, thus coordinating target recognition with assembly of the autophagic apparatus and initiation of autophagy. Also regulates autophagy through FIP200/RB1CC1 ubiquitination and subsequent decreased protein stability. Represses the innate antiviral response by facilitating the formation of the NMI-IFI35 complex through 'Lys-63'-linked ubiquitination of NMI. During viral infection, promotes cell pyroptosis by mediating 'Lys-6'-linked ubiquitination of ISG12a/IFI27, facilitating its translocation into the mitochondria and subsequent CASP3 activation. When up-regulated through the IFN/JAK/STAT signaling pathway, promotes 'Lys-27'-linked ubiquitination of MAVS, leading to the recruitment of TBK1 and up-regulation of innate immunity. Mediates 'Lys-63'-linked polyubiquitination of G3BP1 in response to heat shock, leading to stress granule disassembly. This chain is E3 ubiquitin-protein ligase TRIM21 (TRIM21), found in Bos taurus (Bovine).